Here is a 265-residue protein sequence, read N- to C-terminus: Undecaprenyl-diphosphatase (265 aa).

Helical transmembrane passes span 18 to 38, 41 to 61, 69 to 89, 95 to 115, 133 to 153, 171 to 191, 210 to 230, and 245 to 265; these read FLPVSSTGHMIIASSFFGIAH, FTKLFTIVIQLGAILSVVVLY, LDFYFKLLVAFIPAVVLGLLL, GLLENPVTVAVSLLIGGLILL, ITYLQALKIGLFQCIAMIPGV, TTAAEFSFFLAVPTMLGATVK, ILIIGNVVAFIVALLAIKTFI, and RIIAGIILLLIHFFIHPLTII.

This sequence belongs to the UppP family.

The protein localises to the cell inner membrane. It catalyses the reaction di-trans,octa-cis-undecaprenyl diphosphate + H2O = di-trans,octa-cis-undecaprenyl phosphate + phosphate + H(+). Its function is as follows. Catalyzes the dephosphorylation of undecaprenyl diphosphate (UPP). Confers resistance to bacitracin. In Flavobacterium johnsoniae (strain ATCC 17061 / DSM 2064 / JCM 8514 / BCRC 14874 / CCUG 350202 / NBRC 14942 / NCIMB 11054 / UW101) (Cytophaga johnsonae), this protein is Undecaprenyl-diphosphatase (uppP).